The following is a 233-amino-acid chain: MNKPIIALDFQTYEEVETFLAKFSGETLSVKVGMELFYSNGPVIVEKIKQQNHEIFLDLKLHDIPNTVKSAMIGLAKLGVDMVNVHAAGGKKMMEAAKEGLEIGSPSGKRPKIIAVTQLTSTSETDMQTEQLIKTSLLESVMHYSNLSKQAGLDGVVCSALEAEDIKQQNGADFLRVTPGIRLASDTADDQIRVVTPEKARLIGSSNIVVGRSITRANDPVAAYNQVLKEWNA.

Residues Asp9, Lys31, 58-67, Thr120, Arg182, Gln191, Gly211, and Arg212 contribute to the substrate site; that span reads DLKLHDIPNT. The Proton donor role is filled by Lys60.

This sequence belongs to the OMP decarboxylase family. Type 1 subfamily. Homodimer.

The enzyme catalyses orotidine 5'-phosphate + H(+) = UMP + CO2. It participates in pyrimidine metabolism; UMP biosynthesis via de novo pathway; UMP from orotate: step 2/2. Its function is as follows. Catalyzes the decarboxylation of orotidine 5'-monophosphate (OMP) to uridine 5'-monophosphate (UMP). The polypeptide is Orotidine 5'-phosphate decarboxylase (Listeria monocytogenes serovar 1/2a (strain ATCC BAA-679 / EGD-e)).